Consider the following 308-residue polypeptide: MMKLDEIIETLRQGKHVDEDSIYSLCVMAQELLMNESNVTHVDTPVTICGDIHGQLHDLLTLFAKSGGIEKNRYIFLGDFVDRGFYSLESFLLLVCYKLRYPDRIVLIRGNHETRQITKVYGFYDEVVRKYGNSNVWRYCCEVFDYLPLGAIVNNKVFCVHGGLSPDVLSINEIRTIDRKKEVPHEGAMCDLLWSDPEDVDTWSLSPRGAGFLFGQNEVDKFLHTNSVELIARAHQLVMEGYKEMFDGGLVTVWSAPNYCYRCGNVAAVLRIDDDMTKDYTIFEAVQARDSGGNVILPTKKPQMDYFL.

The Mn(2+) site is built by D51, H53, D79, and N111. The Proton donor role is filled by H112. H161 and H235 together coordinate Mn(2+). L308 is subject to Leucine methyl ester.

It belongs to the PPP phosphatase family. PP-4 (PP-X) subfamily. In terms of assembly, catalytic subunit of the histone H2A phosphatase complex (HTP-C) containing PPH3, PSY2 and PSY4. Mn(2+) is required as a cofactor.

It is found in the cytoplasm. The protein resides in the nucleus. It catalyses the reaction O-phospho-L-seryl-[protein] + H2O = L-seryl-[protein] + phosphate. The catalysed reaction is O-phospho-L-threonyl-[protein] + H2O = L-threonyl-[protein] + phosphate. Forms the histone H2A phosphatase complex in association with the regulatory subunits PSY2 and PSY4, which dephosphorylates H2AS128ph (gamma-H2A) that has been displaced from sites of DNA lesions in the double-stranded DNA break repair process. Dephosphorylation is necessary for efficient recovery from the DNA damage checkpoint. The polypeptide is Serine/threonine-protein phosphatase 4 catalytic subunit (PPH3) (Kluyveromyces lactis (strain ATCC 8585 / CBS 2359 / DSM 70799 / NBRC 1267 / NRRL Y-1140 / WM37) (Yeast)).